The sequence spans 151 residues: Large ribosomal subunit protein bL9 (151 aa).

This sequence belongs to the bacterial ribosomal protein bL9 family.

In terms of biological role, binds to the 23S rRNA. In Oenococcus oeni (strain ATCC BAA-331 / PSU-1), this protein is Large ribosomal subunit protein bL9.